The sequence spans 1072 residues: Isoleucine--tRNA ligase, cytoplasmic (1072 aa).

Residues Pro-47 to His-57 carry the 'HIGH' region motif. Residue Lys-486 forms a Glycyl lysine isopeptide (Lys-Gly) (interchain with G-Cter in ubiquitin) linkage. The 'KMSKS' region motif lies at Lys-602–Ser-606. Residue Lys-605 participates in ATP binding. Ser-829 and Ser-1059 each carry phosphoserine.

It belongs to the class-I aminoacyl-tRNA synthetase family.

It is found in the cytoplasm. The enzyme catalyses tRNA(Ile) + L-isoleucine + ATP = L-isoleucyl-tRNA(Ile) + AMP + diphosphate. This Saccharomyces cerevisiae (strain ATCC 204508 / S288c) (Baker's yeast) protein is Isoleucine--tRNA ligase, cytoplasmic (ILS1).